The chain runs to 189 residues: Small ribosomal subunit protein uS4 (189 aa).

The S4 RNA-binding domain maps to arginine 107–glycine 178. The interval histidine 160–glutamate 189 is disordered.

Belongs to the universal ribosomal protein uS4 family. In terms of assembly, component of the small ribosomal subunit. Mature ribosomes consist of a small (40S) and a large (60S) subunit. The 40S subunit contains about 32 different proteins and 1 molecule of RNA (18S). The 60S subunit contains 45 different proteins and 3 molecules of RNA (25S, 5.8S and 5S).

Its subcellular location is the cytoplasm. Its function is as follows. Component of the ribosome, a large ribonucleoprotein complex responsible for the synthesis of proteins in the cell. The small ribosomal subunit (SSU) binds messenger RNAs (mRNAs) and translates the encoded message by selecting cognate aminoacyl-transfer RNA (tRNA) molecules. The large subunit (LSU) contains the ribosomal catalytic site termed the peptidyl transferase center (PTC), which catalyzes the formation of peptide bonds, thereby polymerizing the amino acids delivered by tRNAs into a polypeptide chain. The nascent polypeptides leave the ribosome through a tunnel in the LSU and interact with protein factors that function in enzymatic processing, targeting, and the membrane insertion of nascent chains at the exit of the ribosomal tunnel. RPS9B is involved in nucleolar processing of pre-18S ribosomal RNA and ribosome assembly. The chain is Small ribosomal subunit protein uS4 (RPS9B) from Candida albicans (strain SC5314 / ATCC MYA-2876) (Yeast).